The following is a 424-amino-acid chain: Putative chloroquine resistance transporter (424 aa).

The Cytoplasmic portion of the chain corresponds to 1-57; it reads MKILKKKKKGNQQIVPDERYRELDSHAPNENEIADEAPMSRKILYYLKLVYHEIREN. Residues 58–78 traverse the membrane as a helical segment; the sequence is ITIYLLIILYLCVCVMNKIMA. The Vacuolar portion of the chain corresponds to 79–89; that stretch reads KRTLKKIGNYS. Residue asparagine 87 is glycosylated (N-linked (GlcNAc...) asparagine). Residues 90–110 traverse the membrane as a helical segment; that stretch reads FVTSETHNTICMVVFFSLYFI. Topologically, residues 111-124 are cytoplasmic; it reads FGRRVTSAKERHQN. A helical transmembrane segment spans residues 125–145; it reads FGLQFLLISLLDACSVIIAFI. Residues 146–153 are Vacuolar-facing; it reads GLTRTTGN. Residues 154-174 traverse the membrane as a helical segment; the sequence is IQSFVMQLSIPINMFFCFLIL. Topologically, residues 175–179 are cytoplasmic; it reads RYRYH. The chain crosses the membrane as a helical span at residues 180–200; sequence LFNYVGASIIVLTIAIVEFIL. Topologically, residues 201–208 are vacuolar; sequence SFETQEEN. The helical transmembrane segment at 209–229 threads the bilayer; sequence SIVFNLVLIASLIPMSFSNMT. At 230 to 246 the chain is on the cytoplasmic side; the sequence is REIVFKKYKINILRLNA. Residues 247 to 267 traverse the membrane as a helical segment; that stretch reads VVSFFQIFTSCLMLPMYTLPF. At 268-316 the chain is on the vacuolar side; the sequence is LKQINLPFSEIGTNIKNGFRCLILGQNTIVENCGLGMAKMCDDCEGAWK. 2 disulfides stabilise this stretch: cysteine 288–cysteine 311 and cysteine 300–cysteine 308. A helical membrane pass occupies residues 317 to 337; the sequence is TFLAYSFFNICDNLITSFIID. Over 338-345 the chain is Cytoplasmic; sequence KFSTMTYT. The chain crosses the membrane as a helical span at residues 346-366; it reads IVSCIQGPAIAIAYYFKFLAG. The Vacuolar segment spans residues 367–376; the sequence is DAVMKPRVLD. The chain crosses the membrane as a helical span at residues 377 to 397; it reads FVTLFGYLFGSIIYRVGNIIL. The Cytoplasmic segment spans residues 398-424; sequence EKKKMMEAGNDDDSEGELTNAESIITQ.

Belongs to the CRT-like transporter family.

The protein localises to the vacuole membrane. Its function is as follows. Nutrient transporter. Involved in maintaining the osmotic homeostasis of the digestive vacuole. This Plasmodium knowlesi protein is Putative chloroquine resistance transporter.